The sequence spans 419 residues: uncharacterized protein (419 aa).

The protein belongs to the MT-A70-like family.

The protein localises to the cytoplasm. This is an uncharacterized protein from Schizosaccharomyces pombe (strain 972 / ATCC 24843) (Fission yeast).